A 226-amino-acid polypeptide reads, in one-letter code: Large ribosomal subunit protein uL1 (226 aa).

Belongs to the universal ribosomal protein uL1 family. As to quaternary structure, part of the 50S ribosomal subunit.

Functionally, binds directly to 23S rRNA. The L1 stalk is quite mobile in the ribosome, and is involved in E site tRNA release. Protein L1 is also a translational repressor protein, it controls the translation of the L11 operon by binding to its mRNA. The protein is Large ribosomal subunit protein uL1 of Treponema denticola (strain ATCC 35405 / DSM 14222 / CIP 103919 / JCM 8153 / KCTC 15104).